Here is a 321-residue protein sequence, read N- to C-terminus: Cytochrome f (321 aa).

A signal peptide spans 1–38 (MINLFLLKYKTAFSTFLKPFAYLSLILSVCFYSIQAQA). Positions 39, 59, 62, and 63 each coordinate heme. A helical transmembrane segment spans residues 287–306 (VKGLIAFFFTVILAQILLVL).

This sequence belongs to the cytochrome f family. As to quaternary structure, the 4 large subunits of the cytochrome b6-f complex are cytochrome b6, subunit IV (17 kDa polypeptide, petD), cytochrome f and the Rieske protein, while the 4 small subunits are PetG, PetL, PetM and PetN. The complex functions as a dimer. Heme serves as cofactor.

Its subcellular location is the plastid. It localises to the chloroplast thylakoid membrane. In terms of biological role, component of the cytochrome b6-f complex, which mediates electron transfer between photosystem II (PSII) and photosystem I (PSI), cyclic electron flow around PSI, and state transitions. The polypeptide is Cytochrome f (petA) (Guillardia theta (Cryptophyte)).